The chain runs to 505 residues: Lysine--tRNA ligase (505 aa).

2 residues coordinate Mg(2+): E415 and E422.

It belongs to the class-II aminoacyl-tRNA synthetase family. As to quaternary structure, homodimer. Requires Mg(2+) as cofactor.

It is found in the cytoplasm. The enzyme catalyses tRNA(Lys) + L-lysine + ATP = L-lysyl-tRNA(Lys) + AMP + diphosphate. This Pectobacterium carotovorum subsp. carotovorum (strain PC1) protein is Lysine--tRNA ligase.